Reading from the N-terminus, the 627-residue chain is uncharacterized protein (627 aa).

Disordered regions lie at residues 57–82 (EDAM…QGED), 96–121 (PEAQ…APPG), 160–184 (GCSH…DAAY), 198–232 (AQSQ…CPSG), 247–277 (SHDA…RGAP), 335–358 (RQAG…EAAY), and 449–579 (VFDV…PPLS). Positions 169 to 183 (SSSDQAADAPAGDAA) are enriched in low complexity. Residues 336-357 (QAGAEPAQAPATAPAPEGTEAA) show a composition bias toward low complexity. Basic and acidic residues predominate over residues 450–464 (FDVKEQGAHADRDAA).

This is an uncharacterized protein from Treponema pallidum (strain Nichols).